Consider the following 75-residue polypeptide: Antitoxin MT0312 (75 aa).

Functionally, antitoxin component of a type II toxin-antitoxin (TA) system. The protein is Antitoxin MT0312 of Mycobacterium tuberculosis (strain CDC 1551 / Oshkosh).